The primary structure comprises 370 residues: MVRSGKKAVVLAAVAFCATSVVQKSHGFVPSPLRQRAAAAGAAAASAATMFAPAAFADEIGDAAKKLGDASYAFAKEVDWNNGIFLQAPGKLQPLEALKAIDKMIVMGAAADPKLLKAAAEAHHKAIGSVSGPNGVTSRADWDNVNAALGRVIASVPENMVMDVYDSVSKITDPKVPAYMKSLVSGADAEKAYEGFLAFKDVVKKSQVTSAAGPATVPSGDKIGVAAQQLSEASYPFLKEIDWLSDVYMKPLPGVSAQQSLKAIDKMIVMGAQADGNALKAAAEAHHKAIGSIDATGVTSAADYAAVNAALGRVIASVPKSTVMDVYNAMAGATDTSIPLNMFSKVNPLDANAAAKAFYTFKDVVQAAQR.

Residues 1–57 constitute a chloroplast transit peptide; sequence MVRSGKKAVVLAAVAFCATSVVQKSHGFVPSPLRQRAAAAGAAAASAATMFAPAAFA. Repeat copies occupy residues 58–220 and 221–370.

In terms of assembly, homotrimer.

It localises to the plastid. It is found in the chloroplast. In terms of biological role, water-soluble antenna for capture of solar energy in the blue-green range. Peridinin is an asymmetric carotenoid. This chain is Peridinin-chlorophyll a-binding protein 1, chloroplastic, found in Amphidinium carterae (Dinoflagellate).